A 259-amino-acid chain; its full sequence is MNILAPVRRDRVLAELPQCLKKEAALHVRKDFHPRVTCACQEHRTGTVGFKISKVIVVGDLSVGKTCLINRFCKDTFDKNYKATIGVDFEMERFEVLGVPFSLQLWDTAGQERFKCIASTYYRGAQAIIIVFNLNDVASLEHSKQWLADALKENDPSNVLLFLVGSKKDLSTPAQYSLMEKDALKVAQEIKAEYWSVSSLTGENVREFFFRVAALTFEANVLAELEKSGSRHIGDVVRINSDDKNLYLTASKKKATCCP.

An N-acetylmethionine modification is found at Met-1. 8 residues coordinate GTP: Ser-62, Val-63, Gly-64, Lys-65, Thr-66, Asp-78, Tyr-81, and Thr-84. Thr-66 lines the Mg(2+) pocket. The short motif at 71–89 (RFCKDTFDKNYKATIGVDF) is the Switch 1 element. 2 residues coordinate Mg(2+): Thr-84 and Asp-107. Positions 108–127 (TAGQERFKCIASTYYRGAQA) match the Switch 2 motif. GTP-binding residues include Gly-110, Lys-167, Asp-169, and Ser-198. Ser-241 is subject to Phosphoserine. 2 S-geranylgeranyl cysteine lipidation sites follow: Cys-257 and Cys-258.

This sequence belongs to the small GTPase superfamily. Rab family. Interacts with RILP. The GTP-bound form interacts with REP15. Mg(2+) is required as a cofactor.

The protein resides in the cytoplasm. It localises to the golgi apparatus. Its subcellular location is the cytoplasmic vesicle. The protein localises to the phagosome. It is found in the phagosome membrane. The protein resides in the cell projection. It localises to the cilium. Its subcellular location is the cytoskeleton. The protein localises to the microtubule organizing center. It is found in the centrosome. The protein resides in the centriole. It catalyses the reaction GTP + H2O = GDP + phosphate + H(+). With respect to regulation, regulated by guanine nucleotide exchange factors (GEFs) which promote the exchange of bound GDP for free GTP. Regulated by GTPase activating proteins (GAPs) which increase the GTP hydrolysis activity. Inhibited by GDP dissociation inhibitors (GDIs). Its function is as follows. The small GTPases Rab are key regulators of intracellular membrane trafficking, from the formation of transport vesicles to their fusion with membranes. Rabs cycle between an inactive GDP-bound form and an active GTP-bound form that is able to recruit to membranes different sets of downstream effectors directly responsible for vesicle formation, movement, tethering and fusion. RAB34 transports protein involved in the redistribution of lysosomes to the peri-Golgi region. Plays a role in the maturation of phagosomes that engulf pathogens, such as S.aureus and M.tuberculosis. Plays a role in the fusion of phagosomes with lysosomes. Involved in ciliogenesis. In particular, it is required for early steps of the intracellular cilium assembly pathway initiated by trafficking and docking of ciliary vesicles to the centrioles in the cytoplasm, followed by axoneme formation in the cytoplasm. After axoneme elongation, the centrioles migrate close to the cell surface so that ciliary vesicles can fuse with the plasma membrane to expose cilia to the extracellular space. It seems dispensable for ciliogenesis via the extracellular pathway where cilium assembly begins after migration and docking of the centriole to the plasma membrane. Also acts as a positive regulator of hedgehog signaling and regulates ciliary function. In Rattus norvegicus (Rat), this protein is Ras-related protein Rab-34.